The primary structure comprises 160 residues: MGVYTYENEFTSDIPAPKLFKAFVLDADNLIPKIAPQAIKCAEILEGDGGPGTIKKITFGEGSHYGYVKHKIHSIDKENHTYSYSLIEGDALSDNIEKIDYETKLVSAPHGGTIIKTTSKYHTKGDVEIKEEHVKAGKEKASHLFKLIEGYLKDHPSEYN.

Belongs to the BetVI family. In terms of assembly, monomer.

The protein is Major strawberry allergen Fra a 1-B of Fragaria ananassa (Strawberry).